The primary structure comprises 379 residues: Succinyl-diaminopimelate desuccinylase (379 aa).

A Zn(2+)-binding site is contributed by His70. The active site involves Asp72. Residue Asp103 participates in Zn(2+) binding. The active-site Proton acceptor is Glu137. Zn(2+)-binding residues include Glu138, Glu166, and His352.

Belongs to the peptidase M20A family. DapE subfamily. In terms of assembly, homodimer. The cofactor is Zn(2+). Co(2+) is required as a cofactor.

It catalyses the reaction N-succinyl-(2S,6S)-2,6-diaminopimelate + H2O = (2S,6S)-2,6-diaminopimelate + succinate. Its pathway is amino-acid biosynthesis; L-lysine biosynthesis via DAP pathway; LL-2,6-diaminopimelate from (S)-tetrahydrodipicolinate (succinylase route): step 3/3. In terms of biological role, catalyzes the hydrolysis of N-succinyl-L,L-diaminopimelic acid (SDAP), forming succinate and LL-2,6-diaminopimelate (DAP), an intermediate involved in the bacterial biosynthesis of lysine and meso-diaminopimelic acid, an essential component of bacterial cell walls. This Burkholderia cenocepacia (strain HI2424) protein is Succinyl-diaminopimelate desuccinylase.